A 729-amino-acid polypeptide reads, in one-letter code: Disintegrin and metalloproteinase domain-containing protein 21 (729 aa).

The first 39 residues, M1 to T39, serve as a signal peptide directing secretion. The propeptide occupies Q40–P209. Residue N169 is glycosylated (N-linked (GlcNAc...) asparagine). A Cysteine switch motif is present at residues M176–K183. C178 is a binding site for Zn(2+). The Extracellular segment spans residues H210 to R685. Residues W212–P402 form the Peptidase M12B domain. An N-linked (GlcNAc...) asparagine glycan is attached at N231. Intrachain disulfides connect C320/C397, C360/C382, and C362/C367. A Zn(2+)-binding site is contributed by H345. E346 is a catalytic residue. Residues H349 and H355 each contribute to the Zn(2+) site. 3 N-linked (GlcNAc...) asparagine glycosylation sites follow: N381, N441, and N482. The 87-residue stretch at V410 to D496 folds into the Disintegrin domain. 4 disulfides stabilise this stretch: C468–C488, C638–C649, C643–C655, and C657–C666. The EGF-like domain maps to C638 to L667. Residues V686–I706 form a helical membrane-spanning segment. At A707–G729 the chain is on the cytoplasmic side.

Zn(2+) serves as cofactor. Post-translationally, has no obvious cleavage site for furin endopeptidase, suggesting that the proteolytic processing is regulated. In terms of tissue distribution, highly expressed in Leydig cells. Expressed also in cauda epididymidis, vas deferens, convoluted tubules, kidney and the parietal cells of stomach. Not detected on developing spermatocytes or mature sperm.

The protein localises to the membrane. In terms of biological role, may be involved in sperm maturation and/or fertilization. May also be involved in epithelia functions associated with establishing and maintaining gradients of ions or nutrients. This chain is Disintegrin and metalloproteinase domain-containing protein 21 (Adam21), found in Mus musculus (Mouse).